A 954-amino-acid polypeptide reads, in one-letter code: Protein teashirt (954 aa).

Disordered regions lie at residues 20–91 (LPTA…SLPS), 167–207 (ESAE…PQLG), and 276–331 (VKGG…GSGA). Gly residues predominate over residues 47-57 (HGGGAGSGGVG). A compositionally biased stretch (polar residues) spans 292–303 (SKATTPQAASQP). Residues 318 to 328 (SGGGSGGGAAG) are compositionally biased toward gly residues. The C2H2-type 1 zinc finger occupies 354–378 (FRCVWCKQSFPTLEALTTHMKDSKH). The disordered stretch occupies residues 383–444 (VPPFGNLPSN…YRGDPPTPLP (62 aa)). Residues 417–428 (SGSASNHSPSAN) show a composition bias toward low complexity. 2 consecutive C2H2-type zinc fingers follow at residues 466-490 (LKCMRCGESFRSLGEMTKHMQETQH) and 533-557 (LTCKVCDKAFNSLGDLSNHMAKNNH). Disordered stretches follow at residues 563-622 (LQSA…DKND), 689-714 (FDTPPRHASLPASSPSNSSTKNTSPV), and 748-935 (TSSE…NLTA). Residues 568–578 (ARKRPAPKKRE) show a composition bias toward basic residues. Basic and acidic residues predominate over residues 579–588 (KSLPVRKLLE). Low complexity predominate over residues 696–712 (ASLPASSPSNSSTKNTS). Residues Ser750 and Ser758 each carry the phosphoserine modification. Residues 778 to 807 (GHDEESSKPAIKQEREAESKPVKMEIKSEF) are compositionally biased toward basic and acidic residues. Over residues 842–851 (PKTPSSAASP) the composition is skewed to low complexity. Polar residues-rich tracts occupy residues 862–885 (AESQRSVTPKSPASSHKSYDGSSE) and 893–907 (DSLNALSSMFDSLGS). Residues 910–926 (AGANSRAKLAAAAAAGG) are compositionally biased toward low complexity.

The protein belongs to the teashirt C2H2-type zinc-finger protein family. Binds arm. As to expression, shows a dynamic expression pattern during embryogenesis. Expressed in the embryonic trunk region (PS 3-13) with expression strongest in the thoracic segments. Expressed in a small group of cells corresponding to the anal tuft from stage 14. Strongly expressed in the embryonic ventral nerve cord. Also expressed in the proximal domain of the leg imaginal disk and in the region of the wing disk that will give rise to the proximal wing hinge. Expressed at high levels in the anterior and central embryonic midgut mesoderm and in the embryonic midgut endoderm. Expressed at a low level in more posterior visceral mesoderm of the gut. From stage 12 onwards, tsh and tio are colocalized in some cells of the CNS, trunk epidermis, hindgut and Malpighian tubules.

Its subcellular location is the nucleus. The protein localises to the cytoplasm. Its function is as follows. Homeotic protein that acts downstream of Arm in the Wg cascade during embryogenesis to determine segment identity throughout the entire trunk. Acts cooperatively with other trunk homeotic proteins to repress head homeotic genes and therefore repress head segmental identity. Necessary, in combination with Scr, for the formation of the prothoracic segment. Promotes eye development in the dorsal region of the eye disk and suppresses eye development in the ventral region in combination with Wg-signaling and several early dorso-ventral eye patterning genes. Required for proper development of proximal leg segments. Has differential functions along the dorso-ventral axs of the antennal and leg disks. May play a role in wing hinge development. Possible involvement in chromatin structure for modulation of transcription. Binds DNA and can act as both a transcriptional repressor and activator. Positively regulates its own expression as well as that of Dll. Negatively regulates the expression of mod. Required for Wg-mediated transcriptional repression of Ubx in the midgut. Also represses transcription of lab in the midgut and is necessary for the proper formation of anterior and central midgut structures. Tiptop (tio) and teashirt (tsh) have, on the whole, common activities. Tio and tsh repress each other's expression and tsh has a crucial role for trunk patterning that is in part masked by ectopic expression of tiptop. Both genes share a common activity required for the activation of Ser and svb and the maintenance of en and wg. This Drosophila melanogaster (Fruit fly) protein is Protein teashirt (tsh).